Here is a 325-residue protein sequence, read N- to C-terminus: Acetyl-coenzyme A carboxylase carboxyl transferase subunit alpha (325 aa).

Residues 35–292 (EIEKLEARLA…DKVLKRSLKQ (258 aa)) form the CoA carboxyltransferase C-terminal domain.

The protein belongs to the AccA family. As to quaternary structure, acetyl-CoA carboxylase is a heterohexamer composed of biotin carboxyl carrier protein (AccB), biotin carboxylase (AccC) and two subunits each of ACCase subunit alpha (AccA) and ACCase subunit beta (AccD).

The protein localises to the cytoplasm. It catalyses the reaction N(6)-carboxybiotinyl-L-lysyl-[protein] + acetyl-CoA = N(6)-biotinyl-L-lysyl-[protein] + malonyl-CoA. Its pathway is lipid metabolism; malonyl-CoA biosynthesis; malonyl-CoA from acetyl-CoA: step 1/1. Functionally, component of the acetyl coenzyme A carboxylase (ACC) complex. First, biotin carboxylase catalyzes the carboxylation of biotin on its carrier protein (BCCP) and then the CO(2) group is transferred by the carboxyltransferase to acetyl-CoA to form malonyl-CoA. The chain is Acetyl-coenzyme A carboxylase carboxyl transferase subunit alpha from Geobacillus sp. (strain WCH70).